The chain runs to 242 residues: Ribonuclease 3 (242 aa).

Residues leucine 10 to glycine 146 enclose the RNase III domain. Glutamate 59 contacts Mg(2+). Aspartate 63 is an active-site residue. Aspartate 132 and glutamate 135 together coordinate Mg(2+). Residue glutamate 135 is part of the active site. The DRBM domain maps to aspartate 172–lysine 241. The interval valine 216–lysine 242 is disordered. The span at threonine 223 to lysine 242 shows a compositional bias: basic and acidic residues.

Belongs to the ribonuclease III family. As to quaternary structure, homodimer. It depends on Mg(2+) as a cofactor.

The protein localises to the cytoplasm. The catalysed reaction is Endonucleolytic cleavage to 5'-phosphomonoester.. Its function is as follows. Digests double-stranded RNA. Involved in the processing of primary rRNA transcript to yield the immediate precursors to the large and small rRNAs (23S and 16S). Processes some mRNAs, and tRNAs when they are encoded in the rRNA operon. Processes pre-crRNA and tracrRNA of type II CRISPR loci if present in the organism. The polypeptide is Ribonuclease 3 (Staphylococcus carnosus (strain TM300)).